The following is a 409-amino-acid chain: Elongation factor Tu, chloroplastic (409 aa).

One can recognise a tr-type G domain in the interval 10 to 214; sequence KPHVNIGTIG…AVDTYIPTPE (205 aa). The G1 stretch occupies residues 19–26; the sequence is GHVDHGKT. 19–26 lines the GTP pocket; that stretch reads GHVDHGKT. Thr-26 lines the Mg(2+) pocket. The tract at residues 60–64 is G2; it reads GITIN. A G3 region spans residues 81–84; it reads DCPG. Residues 81–85 and 136–139 each bind GTP; these read DCPGH and NKED. The segment at 136-139 is G4; sequence NKED. Residues 174-176 are G5; the sequence is SAL.

It belongs to the TRAFAC class translation factor GTPase superfamily. Classic translation factor GTPase family. EF-Tu/EF-1A subfamily.

Its subcellular location is the plastid. The protein localises to the chloroplast. It catalyses the reaction GTP + H2O = GDP + phosphate + H(+). In terms of biological role, GTP hydrolase that promotes the GTP-dependent binding of aminoacyl-tRNA to the A-site of ribosomes during protein biosynthesis. The protein is Elongation factor Tu, chloroplastic (tufA) of Pyropia yezoensis (Susabi-nori).